Reading from the N-terminus, the 226-residue chain is Large ribosomal subunit protein uL1 (226 aa).

This sequence belongs to the universal ribosomal protein uL1 family. Part of the 50S ribosomal subunit.

Functionally, binds directly to 23S rRNA. The L1 stalk is quite mobile in the ribosome, and is involved in E site tRNA release. Its function is as follows. Protein L1 is also a translational repressor protein, it controls the translation of the L11 operon by binding to its mRNA. The polypeptide is Large ribosomal subunit protein uL1 (Borreliella burgdorferi (strain ZS7) (Borrelia burgdorferi)).